Here is a 432-residue protein sequence, read N- to C-terminus: Alcohol acyltransferase 9 (432 aa).

Catalysis depends on proton acceptor residues histidine 156 and aspartate 379.

This sequence belongs to the plant acyltransferase family.

The enzyme catalyses 2-(methylsulfanyl)acetyl-CoA + butan-1-ol = butyl 2-(methylsulfanyl)acetate + CoA. The catalysed reaction is ethanol + acetyl-CoA = ethyl acetate + CoA. It carries out the reaction butan-1-ol + acetyl-CoA = butyl acetate + CoA. It catalyses the reaction butan-1-ol + propanoyl-CoA = butyl propanoate + CoA. Involved in the biosynthesis of volatile esters which confer kiwifruit flavor. Alcohol acyl transferase that can use a wide range of alcohols as substrate to produce esters. Exhibits acetyl-CoA:alcohol O-acyltransferase activity. The chain is Alcohol acyltransferase 9 from Actinidia chinensis var. chinensis (Chinese soft-hair kiwi).